We begin with the raw amino-acid sequence, 530 residues long: Ubiquitin carboxyl-terminal hydrolase 17-like protein 5 (530 aa).

In terms of domain architecture, USP spans 80–375 (AGLQNMGNTC…QAYVLFYIQK (296 aa)). Cysteine 89 (nucleophile) is an active-site residue. Histidine 334 acts as the Proton acceptor in catalysis. Composition is skewed to basic and acidic residues over residues 382-392 (SESVSRGREPR) and 398-412 (DTDRRATQGELKRDH). Disordered regions lie at residues 382 to 412 (SESVSRGREPRALGAEDTDRRATQGELKRDH) and 477 to 530 (NHHP…LVCQ). Positions 493 to 505 (TPTHQESMNTGTL) are enriched in polar residues. Over residues 510–524 (GRARRSKGKNKHSKR) the composition is skewed to basic residues.

It belongs to the peptidase C19 family. USP17 subfamily.

The protein resides in the nucleus. The protein localises to the endoplasmic reticulum. The catalysed reaction is Thiol-dependent hydrolysis of ester, thioester, amide, peptide and isopeptide bonds formed by the C-terminal Gly of ubiquitin (a 76-residue protein attached to proteins as an intracellular targeting signal).. Its function is as follows. Deubiquitinating enzyme that removes conjugated ubiquitin from specific proteins to regulate different cellular processes that may include cell proliferation, progression through the cell cycle, apoptosis, cell migration, and the cellular response to viral infection. The polypeptide is Ubiquitin carboxyl-terminal hydrolase 17-like protein 5 (USP17L5) (Homo sapiens (Human)).